The chain runs to 392 residues: Formate-dependent phosphoribosylglycinamide formyltransferase (392 aa).

N(1)-(5-phospho-beta-D-ribosyl)glycinamide-binding positions include 22–23 and Glu-82; that span reads EL. Residues Arg-114, Lys-155, 160 to 165, 195 to 198, and Glu-203 contribute to the ATP site; these read SSGKGQ and EGVV. The 190-residue stretch at 119-308 folds into the ATP-grasp domain; sequence RLAAEELGLP…EFALHVRAFL (190 aa). Residues Glu-267 and Glu-279 each coordinate Mg(2+). Residues Asp-286, Lys-355, and 362–363 contribute to the N(1)-(5-phospho-beta-D-ribosyl)glycinamide site; that span reads RR.

The protein belongs to the PurK/PurT family. In terms of assembly, homodimer.

The enzyme catalyses N(1)-(5-phospho-beta-D-ribosyl)glycinamide + formate + ATP = N(2)-formyl-N(1)-(5-phospho-beta-D-ribosyl)glycinamide + ADP + phosphate + H(+). Its pathway is purine metabolism; IMP biosynthesis via de novo pathway; N(2)-formyl-N(1)-(5-phospho-D-ribosyl)glycinamide from N(1)-(5-phospho-D-ribosyl)glycinamide (formate route): step 1/1. Functionally, involved in the de novo purine biosynthesis. Catalyzes the transfer of formate to 5-phospho-ribosyl-glycinamide (GAR), producing 5-phospho-ribosyl-N-formylglycinamide (FGAR). Formate is provided by PurU via hydrolysis of 10-formyl-tetrahydrofolate. This Salmonella paratyphi A (strain ATCC 9150 / SARB42) protein is Formate-dependent phosphoribosylglycinamide formyltransferase.